Reading from the N-terminus, the 583-residue chain is Aspartate--tRNA ligase (583 aa).

Glutamate 173 contributes to the L-aspartate binding site. The aspartate stretch occupies residues 197-200 (QLFK). Residue arginine 219 participates in L-aspartate binding. Residues 219–221 (RDE) and glutamine 228 each bind ATP. Histidine 444 is a binding site for L-aspartate. Glutamate 478 contacts ATP. Arginine 485 contacts L-aspartate. 530–533 (GLDR) lines the ATP pocket.

This sequence belongs to the class-II aminoacyl-tRNA synthetase family. Type 1 subfamily. Homodimer.

It is found in the cytoplasm. It carries out the reaction tRNA(Asp) + L-aspartate + ATP = L-aspartyl-tRNA(Asp) + AMP + diphosphate. Functionally, catalyzes the attachment of L-aspartate to tRNA(Asp) in a two-step reaction: L-aspartate is first activated by ATP to form Asp-AMP and then transferred to the acceptor end of tRNA(Asp). This is Aspartate--tRNA ligase from Azobacteroides pseudotrichonymphae genomovar. CFP2.